Consider the following 616-residue polypeptide: Schwannomin-interacting protein 1 homolog (616 aa).

Residues 38–50 (ESDLTDSDREDDP) show a composition bias toward acidic residues. Disordered stretches follow at residues 38 to 71 (ESDL…GQDS), 204 to 251 (LKQT…PDTF), and 292 to 320 (SSLE…YSNQ). Polar residues-rich tracts occupy residues 62 to 71 (SETFKNGQDS) and 204 to 217 (LKQT…GNST). A coiled-coil region spans residues 550–594 (LQLLVNNLQEYIENLNVTLLESLKERDDLNSDQDDILHDLEKINN).

It belongs to the SCHIP1 family. Interacts with ex; the interaction results in recruitment of Schip1 to the apical cell membrane. Interacts with Tao; the interaction enhances Tao kinase activity. Interacts with Mer. In eye disks of the third instar larvae, expressed in all cells (at protein level).

The protein resides in the cell junction. It localises to the adherens junction. It is found in the apical cell membrane. In terms of biological role, regulator of the Hippo/SWH (Sav/Wts/Hpo) signaling pathway, a signaling pathway that plays a pivotal role in organ size control and tumor suppression by restricting proliferation and promoting apoptosis. The core of this pathway is composed of a kinase cascade wherein Hippo (hpo), in complex with its regulatory protein Salvador (sav), phosphorylates and activates Warts (wts) in complex with its regulatory protein Mats, which in turn phosphorylates and inactivates the Yorkie (yki) oncoprotein. Schip1 promotes kinase activity of Tao and enhances phosphorylation of hpo by Tao. The chain is Schwannomin-interacting protein 1 homolog from Drosophila melanogaster (Fruit fly).